The sequence spans 162 residues: Ciliary microtubule inner protein 5 (162 aa).

The segment at 1–44 (MGSHPTPGLQRTTSAGYRLPPTRPPASVSPAARGGPMASRGLAG) is disordered.

The protein localises to the cell projection. It is found in the cilium. The protein is Ciliary microtubule inner protein 5 of Homo sapiens (Human).